A 161-amino-acid chain; its full sequence is Phosphopantetheine adenylyltransferase (161 aa).

Thr10 is a substrate binding site. ATP contacts are provided by residues 10-11 (TF) and His18. Lys42, Leu74, and Arg88 together coordinate substrate. Residues 89–91 (GVR), Glu99, and 123–129 (YIHISST) contribute to the ATP site.

It belongs to the bacterial CoaD family. Homohexamer. The cofactor is Mg(2+).

It is found in the cytoplasm. It catalyses the reaction (R)-4'-phosphopantetheine + ATP + H(+) = 3'-dephospho-CoA + diphosphate. It functions in the pathway cofactor biosynthesis; coenzyme A biosynthesis; CoA from (R)-pantothenate: step 4/5. Its function is as follows. Reversibly transfers an adenylyl group from ATP to 4'-phosphopantetheine, yielding dephospho-CoA (dPCoA) and pyrophosphate. This chain is Phosphopantetheine adenylyltransferase, found in Aquifex aeolicus (strain VF5).